We begin with the raw amino-acid sequence, 202 residues long: UPF0301 protein Meso_0753 (202 aa).

This sequence belongs to the UPF0301 (AlgH) family.

The protein is UPF0301 protein Meso_0753 of Chelativorans sp. (strain BNC1).